The chain runs to 518 residues: ESX-3 secretion system ATPase EccB3 (518 aa).

A disordered region spans residues 1 to 26 (MTGPVNPDDRRSFSSRTPVNENPDGV). The helical transmembrane segment at 71 to 91 (VLTGALILVTGLVGCFIFSLF) threads the bilayer.

It belongs to the EccB family. As to quaternary structure, part of the ESX-3 / type VII secretion system (T7SS), which is composed of cytosolic and membrane components. The ESX-3 membrane complex is composed of EccB3, EccC3, EccD3 and EccE3.

It is found in the cell inner membrane. Functionally, an ATPase. Part of the ESX-3 specialized secretion system, which is required for siderophore-mediated iron acquisition and for the secretion of EsxH and EsxG. This Mycolicibacterium smegmatis (strain ATCC 700084 / mc(2)155) (Mycobacterium smegmatis) protein is ESX-3 secretion system ATPase EccB3.